We begin with the raw amino-acid sequence, 118 residues long: Holo-[acyl-carrier-protein] synthase (118 aa).

Residues Asp8 and Glu58 each coordinate Mg(2+).

This sequence belongs to the P-Pant transferase superfamily. AcpS family. Mg(2+) is required as a cofactor.

The protein localises to the cytoplasm. The enzyme catalyses apo-[ACP] + CoA = holo-[ACP] + adenosine 3',5'-bisphosphate + H(+). Functionally, transfers the 4'-phosphopantetheine moiety from coenzyme A to a Ser of acyl-carrier-protein. The sequence is that of Holo-[acyl-carrier-protein] synthase from Streptococcus pyogenes serotype M1.